A 500-amino-acid polypeptide reads, in one-letter code: Cytochrome P450 monooxygenase ausI (500 aa).

A helical membrane pass occupies residues 8-28 (LALLGQPLVPGLMVVSAILYL). Cys-440 lines the heme pocket.

The protein belongs to the cytochrome P450 family. Requires heme as cofactor.

The protein resides in the membrane. Its pathway is secondary metabolite biosynthesis; terpenoid biosynthesis. Functionally, cytochrome P450 monooxygenase; part of the gene cluster B that mediates the biosynthesis of the fungal meroterpenoid acetoxydehydroaustin. The first step of the pathway is the synthesis of 3,5-dimethylorsellinic acid by the polyketide synthase ausA. 3,5-dimethylorsellinic acid is then prenylated by the polyprenyl transferase ausN. Further epoxidation by the FAD-dependent monooxygenase ausM and cyclization by the probable terpene cyclase ausL lead to the formation of protoaustinoid A. Protoaustinoid A is then oxidized to spiro-lactone preaustinoid A3 by the combined action of the FAD-binding monooxygenases ausB and ausC, and the dioxygenase ausE. Acid-catalyzed keto-rearrangement and ring contraction of the tetraketide portion of preaustinoid A3 by ausJ lead to the formation of preaustinoid A4. The aldo-keto reductase ausK, with the help of ausH, is involved in the next step by transforming preaustinoid A4 into isoaustinone which is in turn hydroxylated by the P450 monooxygenase ausI to form austinolide. The cytochrome P450 monooxygenase ausG then modifies austinolide to austinol. Austinol is further acetylated to austin by the O-acetyltransferase ausP, which spontaneously changes to dehydroaustin. The cytochrome P450 monooxygenase then converts dehydroaustin is into 7-dehydrodehydroaustin. The hydroxylation catalyzed by ausR permits the second O-acetyltransferase ausQ to add an additional acetyl group to the molecule, leading to the formation of acetoxydehydroaustin. Due to genetic rearrangements of the clusters and the subsequent loss of some enzymes, the end product of the Penicillium brasilianum austinoid biosynthesis clusters is acetoxydehydroaustin. The sequence is that of Cytochrome P450 monooxygenase ausI from Penicillium brasilianum.